The primary structure comprises 129 residues: Histone H2A-III (129 aa).

The disordered stretch occupies residues 1–22 (MSGRGKQGGKARAKAKSRSSRA). An N-acetylserine modification is found at S2. S2 carries the phosphoserine modification. N6-(2-hydroxyisobutyryl)lysine is present on K6. N6-acetyllysine occurs at positions 6 and 10. Over residues 7 to 19 (QGGKARAKAKSRS) the composition is skewed to basic residues. An N6-(2-hydroxyisobutyryl)lysine; alternate modification is found at K10. Position 10 is an N6-lactoyllysine; alternate (K10). K10 is modified (N6-succinyllysine). Glycyl lysine isopeptide (Lys-Gly) (interchain with G-Cter in ubiquitin) cross-links involve residues K14 and K16. The residue at position 37 (K37) is an N6-(2-hydroxyisobutyryl)lysine; alternate. An N6-(2-hydroxyisobutyryl)lysine mark is found at K75 and K76. N6-(2-hydroxyisobutyryl)lysine; alternate is present on K96. N6-succinyllysine is present on K96. An N6-glutaryllysine; alternate modification is found at K96. Residue K100 is modified to N6-glutaryllysine. Q105 bears the N5-methylglutamine mark. K119 bears the N6-(2-hydroxyisobutyryl)lysine; alternate mark. N6-glutaryllysine; alternate is present on residues K119 and K120. Residue K120 forms a Glycyl lysine isopeptide (Lys-Gly) (interchain with G-Cter in ubiquitin) linkage.

It belongs to the histone H2A family. The nucleosome is a histone octamer containing two molecules each of H2A, H2B, H3 and H4 assembled in one H3-H4 heterotetramer and two H2A-H2B heterodimers. The octamer wraps approximately 147 bp of DNA. Monoubiquitination of Lys-120 (H2AK119Ub) gives a specific tag for epigenetic transcriptional repression. Following DNA double-strand breaks (DSBs), it is ubiquitinated through 'Lys-63' linkage of ubiquitin moieties, leading to the recruitment of repair proteins to sites of DNA damage. H2AK119Ub and ionizing radiation-induced 'Lys-63'-linked ubiquitination are distinct events. In terms of processing, phosphorylation on Ser-2 is enhanced during mitosis. Phosphorylation on Ser-2 directly represses transcription. Post-translationally, glutamine methylation at Gln-105 (H2AQ104me) by FBL is specifically dedicated to polymerase I. It is present at 35S ribosomal DNA locus and impairs binding of the FACT complex.

It localises to the nucleus. The protein resides in the chromosome. In terms of biological role, core component of nucleosome. Nucleosomes wrap and compact DNA into chromatin, limiting DNA accessibility to the cellular machineries which require DNA as a template. Histones thereby play a central role in transcription regulation, DNA repair, DNA replication and chromosomal stability. DNA accessibility is regulated via a complex set of post-translational modifications of histones, also called histone code, and nucleosome remodeling. The polypeptide is Histone H2A-III (Gallus gallus (Chicken)).